The following is a 165-amino-acid chain: Endoribonuclease YbeY (165 aa).

Positions 131, 135, and 141 each coordinate Zn(2+).

This sequence belongs to the endoribonuclease YbeY family. It depends on Zn(2+) as a cofactor.

Its subcellular location is the cytoplasm. Its function is as follows. Single strand-specific metallo-endoribonuclease involved in late-stage 70S ribosome quality control and in maturation of the 3' terminus of the 16S rRNA. The polypeptide is Endoribonuclease YbeY (Agathobacter rectalis (strain ATCC 33656 / DSM 3377 / JCM 17463 / KCTC 5835 / VPI 0990) (Eubacterium rectale)).